The following is a 337-amino-acid chain: ATP-dependent 6-phosphofructokinase (337 aa).

G11 is a binding site for ATP. 21 to 25 provides a ligand contact to ADP; that stretch reads RAVVR. ATP-binding positions include 72 to 73 and 102 to 105; these read RY and GDGS. A Mg(2+)-binding site is contributed by D103. 125–127 serves as a coordination point for substrate; that stretch reads TID. The active-site Proton acceptor is D127. Residue R154 coordinates ADP. Substrate contacts are provided by residues R162 and 169–171; that span reads MGR. Residues 185 to 187, K212, and 214 to 216 each bind ADP; these read GAD and KNH. Residues E223, R245, and 251–254 contribute to the substrate site; that span reads HILR.

It belongs to the phosphofructokinase type A (PFKA) family. ATP-dependent PFK group I subfamily. Prokaryotic clade 'B1' sub-subfamily. As to quaternary structure, homotetramer. It depends on Mg(2+) as a cofactor.

It localises to the cytoplasm. It carries out the reaction beta-D-fructose 6-phosphate + ATP = beta-D-fructose 1,6-bisphosphate + ADP + H(+). Its pathway is carbohydrate degradation; glycolysis; D-glyceraldehyde 3-phosphate and glycerone phosphate from D-glucose: step 3/4. Allosterically activated by ADP and other diphosphonucleosides, and allosterically inhibited by phosphoenolpyruvate. Functionally, catalyzes the phosphorylation of D-fructose 6-phosphate to fructose 1,6-bisphosphate by ATP, the first committing step of glycolysis. This Streptococcus pyogenes serotype M1 protein is ATP-dependent 6-phosphofructokinase.